Here is a 227-residue protein sequence, read N- to C-terminus: PKHD-type hydroxylase Caul_0045 (227 aa).

Residues 78–178 (TILSPLFNRY…RTASFFWIQS (101 aa)) enclose the Fe2OG dioxygenase domain. The Fe cation site is built by histidine 96, aspartate 98, and histidine 159. Residue arginine 169 participates in 2-oxoglutarate binding.

It depends on Fe(2+) as a cofactor. L-ascorbate serves as cofactor.

This is PKHD-type hydroxylase Caul_0045 from Caulobacter sp. (strain K31).